The chain runs to 218 residues: Octanoyltransferase (218 aa).

The BPL/LPL catalytic domain maps to 30–212; the sequence is ENTADEIWLV…HFYNILGYNA (183 aa). Substrate-binding positions include 69–76, 141–143, and 154–156; these read RGGQITYH, SLG, and GLA. The active-site Acyl-thioester intermediate is the cysteine 172.

The protein belongs to the LipB family.

It is found in the cytoplasm. The enzyme catalyses octanoyl-[ACP] + L-lysyl-[protein] = N(6)-octanoyl-L-lysyl-[protein] + holo-[ACP] + H(+). Its pathway is protein modification; protein lipoylation via endogenous pathway; protein N(6)-(lipoyl)lysine from octanoyl-[acyl-carrier-protein]: step 1/2. Catalyzes the transfer of endogenously produced octanoic acid from octanoyl-acyl-carrier-protein onto the lipoyl domains of lipoate-dependent enzymes. Lipoyl-ACP can also act as a substrate although octanoyl-ACP is likely to be the physiological substrate. This is Octanoyltransferase from Actinobacillus pleuropneumoniae serotype 5b (strain L20).